Consider the following 1108-residue polypeptide: DNA-directed RNA polymerase subunit beta (1108 aa).

The interval 1081-1108 (SPRRTPARPTIDYSALDDTDDKEGATTF) is disordered.

The protein belongs to the RNA polymerase beta chain family. As to quaternary structure, in cyanobacteria the RNAP catalytic core is composed of 2 alpha, 1 beta, 1 beta', 1 gamma and 1 omega subunit. When a sigma factor is associated with the core the holoenzyme is formed, which can initiate transcription.

It carries out the reaction RNA(n) + a ribonucleoside 5'-triphosphate = RNA(n+1) + diphosphate. Its function is as follows. DNA-dependent RNA polymerase catalyzes the transcription of DNA into RNA using the four ribonucleoside triphosphates as substrates. The polypeptide is DNA-directed RNA polymerase subunit beta (Thermosynechococcus vestitus (strain NIES-2133 / IAM M-273 / BP-1)).